Reading from the N-terminus, the 256-residue chain is 5'-nucleotidase SurE (256 aa).

Residues Asp-9, Asp-10, Ser-42, and Asn-99 each contribute to the a divalent metal cation site.

This sequence belongs to the SurE nucleotidase family. A divalent metal cation serves as cofactor.

The protein localises to the cytoplasm. The enzyme catalyses a ribonucleoside 5'-phosphate + H2O = a ribonucleoside + phosphate. Functionally, nucleotidase that shows phosphatase activity on nucleoside 5'-monophosphates. This Symbiobacterium thermophilum (strain DSM 24528 / JCM 14929 / IAM 14863 / T) protein is 5'-nucleotidase SurE.